The chain runs to 103 residues: Small ribosomal subunit protein uS10 (103 aa).

This sequence belongs to the universal ribosomal protein uS10 family. As to quaternary structure, part of the 30S ribosomal subunit.

In terms of biological role, involved in the binding of tRNA to the ribosomes. This is Small ribosomal subunit protein uS10 from Shewanella halifaxensis (strain HAW-EB4).